The following is a 229-amino-acid chain: Cytidylate kinase (229 aa).

12-20 contributes to the ATP binding site; the sequence is GPSGVGKST.

The protein belongs to the cytidylate kinase family. Type 1 subfamily.

It is found in the cytoplasm. The catalysed reaction is CMP + ATP = CDP + ADP. The enzyme catalyses dCMP + ATP = dCDP + ADP. The polypeptide is Cytidylate kinase (Mesomycoplasma hyopneumoniae (strain 232) (Mycoplasma hyopneumoniae)).